Here is a 401-residue protein sequence, read N- to C-terminus: 8-amino-7-oxononanoate synthase (401 aa).

Arg19 contacts substrate. A pyridoxal 5'-phosphate-binding site is contributed by 106–107; sequence GY. His131 serves as a coordination point for substrate. Residues Ser176, His204, and Thr233 each coordinate pyridoxal 5'-phosphate. Lys236 carries the N6-(pyridoxal phosphate)lysine modification. A substrate-binding site is contributed by Thr350.

It belongs to the class-II pyridoxal-phosphate-dependent aminotransferase family. BioF subfamily. In terms of assembly, homodimer. Pyridoxal 5'-phosphate is required as a cofactor.

The catalysed reaction is 6-carboxyhexanoyl-[ACP] + L-alanine + H(+) = (8S)-8-amino-7-oxononanoate + holo-[ACP] + CO2. It functions in the pathway cofactor biosynthesis; biotin biosynthesis. Its function is as follows. Catalyzes the decarboxylative condensation of pimeloyl-[acyl-carrier protein] and L-alanine to produce 8-amino-7-oxononanoate (AON), [acyl-carrier protein], and carbon dioxide. The sequence is that of 8-amino-7-oxononanoate synthase from Pseudomonas paraeruginosa (strain DSM 24068 / PA7) (Pseudomonas aeruginosa (strain PA7)).